The primary structure comprises 970 residues: Type III restriction-modification enzyme EcoP15I Res subunit (970 aa).

Residues 75-540 (AKSNIIDVSM…EVGRGLRLPV (466 aa)) are helicase-like domain. 4 residues coordinate AMP: Thr-91, Gly-122, Phe-126, and Asp-226. The tract at residues 894–918 (TYSPDFAYVVKTAEGDYLNFIIETK) is endonuclease domain.

It belongs to the type III restriction-modification system Res protein family. A heterotetramer with stoichiometry Res(2)Mod(2). A heterotrimer with stoichiometry Res(1)Mod(2). Mg(2+) is required as a cofactor. The cofactor is S-adenosyl-L-methionine.

It catalyses the reaction Endonucleolytic cleavage of DNA to give specific double-stranded fragments with terminal 5'-phosphates.. A type III restriction enzyme that recognizes 2 inversely oriented double-stranded sequences 5'-CAGCAG-3' and cleaves DNA 25-27 base pairs downstream of one site. DNA restriction requires both the Res and Mod subunits. DNA topology affects its action; relaxed and negatively supercoiled DNA are digested but positively supercoiled DNA is not a good substrate. Interacts with DNA approximately one half-turn downstream of the recognition site. After binding to one recognition site undergoes random one-dimensional diffusion along DNA until it collides with a stationary enzyme bound to the second DNA site, which is when DNA cleavage occurs. In Escherichia coli, this protein is Type III restriction-modification enzyme EcoP15I Res subunit.